The chain runs to 214 residues: DELTA-actitoxin-Aeq1a (214 aa).

The first 19 residues, methionine 1–alanine 19, serve as a signal peptide directing secretion. The propeptide occupies leucine 20–arginine 35. The plays an important role in the hemolytic activity stretch occupies residues aspartate 38–alanine 47. The tract at residues glycine 46–lysine 65 is N-terminal region. Phosphocholine is bound by residues serine 89, valine 122, serine 140, proline 142, tyrosine 168, tyrosine 172, and tyrosine 173. Positions serine 140–arginine 155 are trp-rich region, which is important for the binding to lipid membrane. A Cell attachment site, crucial for protein stability motif is present at residues arginine 179–aspartate 181.

This sequence belongs to the actinoporin family. Sea anemone subfamily. In terms of assembly, octamer or nonamer in membranes. Monomer in the soluble state.

It is found in the secreted. The protein resides in the nematocyst. It localises to the target cell membrane. In terms of biological role, pore-forming protein that forms cations-selective hydrophilic pores of around 1 nm and causes cardiac stimulation and cytolysis. Pore formation is a multi-step process that involves specific recognition of membrane sphingomyelin (but neither cholesterol nor phosphatidylcholine) using aromatic rich region and adjacent phosphocholine (POC) binding site, firm binding to the membrane (mainly driven by hydrophobic interactions) accompanied by the transfer of the N-terminal region to the lipid-water interface and finally pore formation after oligomerization of monomers. Cytolytic effects include red blood cells hemolysis, platelet aggregation and lysis, cytotoxic and cytostatic effects on fibroblasts. Lethality in mammals has been ascribed to severe vasospasm of coronary vessels, cardiac arrhythmia, and inotropic effects. This is DELTA-actitoxin-Aeq1a from Actinia equina (Beadlet anemone).